Here is a 546-residue protein sequence, read N- to C-terminus: CCA tRNA nucleotidyltransferase, mitochondrial (546 aa).

The protein belongs to the tRNA nucleotidyltransferase/poly(A) polymerase family.

The protein localises to the mitochondrion. It localises to the cytoplasm. The protein resides in the nucleus. The enzyme catalyses a tRNA precursor + 2 CTP + ATP = a tRNA with a 3' CCA end + 3 diphosphate. Nucleotidyltransferase that catalyzes the addition and repair of the essential 3'-terminal CCA sequence in tRNAs, which is necessary for the attachment of amino acids to the 3' terminus of tRNA molecules, using CTP and ATP as substrates. tRNA 3'-terminal CCA addition is required both for tRNA processing and repair. Also involved in tRNA surveillance by mediating tandem CCA addition to generate a CCACCA at the 3' terminus of unstable tRNAs. While stable tRNAs receive only 3'-terminal CCA, unstable tRNAs are marked with CCACCA and rapidly degraded. The structural flexibility of RNA controls the choice between CCA versus CCACCA addition: following the first CCA addition cycle, nucleotide-binding to the active site triggers a clockwise screw motion, producing torque on the RNA. This ejects stable RNAs, whereas unstable RNAs are refolded while bound to the enzyme and subjected to a second CCA catalytic cycle. In Saccharomyces cerevisiae (strain ATCC 204508 / S288c) (Baker's yeast), this protein is CCA tRNA nucleotidyltransferase, mitochondrial (CCA1).